We begin with the raw amino-acid sequence, 271 residues long: Hydroxyethylthiazole kinase (271 aa).

Residue Met50 participates in substrate binding. ATP is bound by residues Arg126 and Thr172. Gly199 contacts substrate.

This sequence belongs to the Thz kinase family. The cofactor is Mg(2+).

The enzyme catalyses 5-(2-hydroxyethyl)-4-methylthiazole + ATP = 4-methyl-5-(2-phosphooxyethyl)-thiazole + ADP + H(+). Its pathway is cofactor biosynthesis; thiamine diphosphate biosynthesis; 4-methyl-5-(2-phosphoethyl)-thiazole from 5-(2-hydroxyethyl)-4-methylthiazole: step 1/1. Its function is as follows. Catalyzes the phosphorylation of the hydroxyl group of 4-methyl-5-beta-hydroxyethylthiazole (THZ). This Akkermansia muciniphila (strain ATCC BAA-835 / DSM 22959 / JCM 33894 / BCRC 81048 / CCUG 64013 / CIP 107961 / Muc) protein is Hydroxyethylthiazole kinase.